Reading from the N-terminus, the 55-residue chain is Mitochondrial import receptor subunit TOM7 homolog (55 aa).

Topologically, residues 1 to 20 are cytoplasmic; it reads MVKLSKEAKQRLQQLFKGGQ. Residues 21 to 40 traverse the membrane as a helical segment; it reads FAIRWGFIPLVIYLGFTRGA. Over 41–55 the chain is Mitochondrial intermembrane; sequence DPGMPEPSVLSLLWG.

This sequence belongs to the Tom7 family. Forms part of the preprotein translocase complex of the outer mitochondrial membrane (TOM complex) which consists of at least 7 different proteins (TOMM5, TOMM6, TOMM7, TOMM20, TOMM22, TOMM40 and TOMM70).

It is found in the mitochondrion outer membrane. Its function is as follows. Required for assembly and stability of the TOM complex. Positive regulator of PRKN translocation to damaged mitochondria. Acts probably by stabilizing PINK1 on the outer membrane of depolarized mitochondria. In Mus musculus (Mouse), this protein is Mitochondrial import receptor subunit TOM7 homolog (Tomm7).